A 378-amino-acid polypeptide reads, in one-letter code: Succinyl-diaminopimelate desuccinylase (378 aa).

Histidine 66 contacts Zn(2+). Aspartate 68 is an active-site residue. Aspartate 99 provides a ligand contact to Zn(2+). The Proton acceptor role is filled by glutamate 133. The Zn(2+) site is built by glutamate 134, glutamate 162, and histidine 348.

Belongs to the peptidase M20A family. DapE subfamily. In terms of assembly, homodimer. It depends on Zn(2+) as a cofactor. Co(2+) serves as cofactor.

It carries out the reaction N-succinyl-(2S,6S)-2,6-diaminopimelate + H2O = (2S,6S)-2,6-diaminopimelate + succinate. It functions in the pathway amino-acid biosynthesis; L-lysine biosynthesis via DAP pathway; LL-2,6-diaminopimelate from (S)-tetrahydrodipicolinate (succinylase route): step 3/3. Its function is as follows. Catalyzes the hydrolysis of N-succinyl-L,L-diaminopimelic acid (SDAP), forming succinate and LL-2,6-diaminopimelate (DAP), an intermediate involved in the bacterial biosynthesis of lysine and meso-diaminopimelic acid, an essential component of bacterial cell walls. This Halorhodospira halophila (strain DSM 244 / SL1) (Ectothiorhodospira halophila (strain DSM 244 / SL1)) protein is Succinyl-diaminopimelate desuccinylase.